We begin with the raw amino-acid sequence, 79 residues long: Small ribosomal subunit protein bS18 (79 aa).

Belongs to the bacterial ribosomal protein bS18 family. Part of the 30S ribosomal subunit. Forms a tight heterodimer with protein bS6.

Its function is as follows. Binds as a heterodimer with protein bS6 to the central domain of the 16S rRNA, where it helps stabilize the platform of the 30S subunit. The polypeptide is Small ribosomal subunit protein bS18 (Afipia carboxidovorans (strain ATCC 49405 / DSM 1227 / KCTC 32145 / OM5) (Oligotropha carboxidovorans)).